The following is a 47-amino-acid chain: Turripeptide Ici9.1 (47 aa).

Cystine bridges form between C1–C31, C5–C24, and C13–C45. The region spanning 1 to 47 (CLSVCSMEYWPVCGSDGKTYPNECHLTSEACMSNTDITVAHVGKCDQ) is the Kazal-like domain.

It belongs to the conopeptide P-like superfamily. In terms of tissue distribution, expressed by the venom duct.

It localises to the secreted. Its function is as follows. Acts as a neurotoxin by inhibiting an ion channel. May also act as a serine protease inhibitor, since it possess the kazal serine protease inhibitor signature. The chain is Turripeptide Ici9.1 from Iotyrris cingulifera (Sea snail).